The chain runs to 223 residues: DNA mismatch repair protein MutH (223 aa).

This sequence belongs to the MutH family.

It is found in the cytoplasm. In terms of biological role, sequence-specific endonuclease that cleaves unmethylated GATC sequences. It is involved in DNA mismatch repair. The polypeptide is DNA mismatch repair protein MutH (Shewanella sp. (strain ANA-3)).